The following is a 292-amino-acid chain: Elongation factor Ts (292 aa).

An involved in Mg(2+) ion dislocation from EF-Tu region spans residues 82–85 (TDFV).

Belongs to the EF-Ts family.

Its subcellular location is the cytoplasm. Its function is as follows. Associates with the EF-Tu.GDP complex and induces the exchange of GDP to GTP. It remains bound to the aminoacyl-tRNA.EF-Tu.GTP complex up to the GTP hydrolysis stage on the ribosome. The protein is Elongation factor Ts of Bordetella avium (strain 197N).